The primary structure comprises 186 residues: Centromere protein M (186 aa).

The protein resides in the nucleus. Its subcellular location is the chromosome. It localises to the centromere. Probable component of a centromeric complex involved in assembly of kinetochore proteins, mitotic progression and chromosome segregation. In Danio rerio (Zebrafish), this protein is Centromere protein M (cenpm).